Here is a 131-residue protein sequence, read N- to C-terminus: Small ribosomal subunit protein uS8 (131 aa).

It belongs to the universal ribosomal protein uS8 family. In terms of assembly, part of the 30S ribosomal subunit. Contacts proteins S5 and S12.

One of the primary rRNA binding proteins, it binds directly to 16S rRNA central domain where it helps coordinate assembly of the platform of the 30S subunit. The chain is Small ribosomal subunit protein uS8 from Burkholderia lata (strain ATCC 17760 / DSM 23089 / LMG 22485 / NCIMB 9086 / R18194 / 383).